The sequence spans 481 residues: uncharacterized protein (481 aa).

A compositionally biased stretch (basic residues) spans 1 to 18; sequence MSRLPSKTKYHSSHRSLN. Residues 1-37 form a disordered region; the sequence is MSRLPSKTKYHSSHRSLNRKTPLLQRSSETNSLRESG. The span at 24–34 shows a compositional bias: polar residues; it reads LQRSSETNSLR. 2 consecutive transmembrane segments (helical) span residues 172–191 and 195–214; these read SIST…AGAI and AAAG…YLCW.

The protein localises to the membrane. This is an uncharacterized protein from Coxiella burnetii (strain RSA 493 / Nine Mile phase I).